The primary structure comprises 537 residues: Putative cysteine ligase BshC (537 aa).

The stretch at 422-450 (IEKVEGMIEQQRRLNQDLLDEVAGNQNNI) forms a coiled coil.

This sequence belongs to the BshC family.

Its function is as follows. Involved in bacillithiol (BSH) biosynthesis. May catalyze the last step of the pathway, the addition of cysteine to glucosamine malate (GlcN-Mal) to generate BSH. The polypeptide is Putative cysteine ligase BshC (Staphylococcus aureus (strain bovine RF122 / ET3-1)).